Here is a 637-residue protein sequence, read N- to C-terminus: Chaperone protein HtpG (637 aa).

Positions 1 to 347 are a; substrate-binding; sequence MTQSVHAETH…SNDLPLNVSR (347 aa). The b stretch occupies residues 348-564; that stretch reads EILQDNKVTV…NHGMSTQMIK (217 aa). The segment at 565 to 637 is c; the sequence is LMRAAGQPVP…SRINRLLLQA (73 aa).

The protein belongs to the heat shock protein 90 family. As to quaternary structure, homodimer.

Its subcellular location is the cytoplasm. Molecular chaperone. Has ATPase activity. The protein is Chaperone protein HtpG of Aeromonas salmonicida (strain A449).